Here is a 795-residue protein sequence, read N- to C-terminus: Phenylalanine--tRNA ligase beta subunit (795 aa).

The tRNA-binding domain maps to 39–149 (SGEFSGVVVA…ADAPIGVDIR (111 aa)). The 76-residue stretch at 402-477 (PKQPIIRLRR…RIYGYNRIPN (76 aa)) folds into the B5 domain. Mg(2+)-binding residues include D455, D461, E464, and E465. Residues 701-794 (SKFPANNRDI…LAQRFQASLR (94 aa)) form the FDX-ACB domain.

It belongs to the phenylalanyl-tRNA synthetase beta subunit family. Type 1 subfamily. In terms of assembly, tetramer of two alpha and two beta subunits. Mg(2+) serves as cofactor.

The protein localises to the cytoplasm. The catalysed reaction is tRNA(Phe) + L-phenylalanine + ATP = L-phenylalanyl-tRNA(Phe) + AMP + diphosphate + H(+). The chain is Phenylalanine--tRNA ligase beta subunit from Haemophilus ducreyi (strain 35000HP / ATCC 700724).